The primary structure comprises 369 residues: tRNA-specific 2-thiouridylase MnmA (369 aa).

ATP is bound by residues 10-17 (GLSGGVDS) and Leu36. Cys97 serves as the catalytic Nucleophile. An intrachain disulfide couples Cys97 to Cys196. Gly122 is a binding site for ATP. An interaction with tRNA region spans residues 146 to 148 (KDQ). The Cysteine persulfide intermediate role is filled by Cys196. The tract at residues 301 to 302 (RY) is interaction with tRNA.

It belongs to the MnmA/TRMU family.

The protein localises to the cytoplasm. The enzyme catalyses S-sulfanyl-L-cysteinyl-[protein] + uridine(34) in tRNA + AH2 + ATP = 2-thiouridine(34) in tRNA + L-cysteinyl-[protein] + A + AMP + diphosphate + H(+). Its function is as follows. Catalyzes the 2-thiolation of uridine at the wobble position (U34) of tRNA, leading to the formation of s(2)U34. The protein is tRNA-specific 2-thiouridylase MnmA of Thermosynechococcus vestitus (strain NIES-2133 / IAM M-273 / BP-1).